The primary structure comprises 142 residues: Hemoglobin subunit alpha-1 (142 aa).

Residues 2-142 (VLSPADKTNV…VSTVLTSKYR (141 aa)) form the Globin domain. Residue H59 participates in O2 binding. A heme b-binding site is contributed by H88.

The protein belongs to the globin family. As to quaternary structure, heterotetramer of two alpha chains and two beta chains. As to expression, red blood cells.

Its function is as follows. Involved in oxygen transport from the lung to the various peripheral tissues. Hemopressin acts as an antagonist peptide of the cannabinoid receptor CNR1. Hemopressin-binding efficiently blocks cannabinoid receptor CNR1 and subsequent signaling. The protein is Hemoglobin subunit alpha-1 (HBA1) of Hylobates lar (Lar gibbon).